We begin with the raw amino-acid sequence, 434 residues long: Xylose isomerase (434 aa).

Residues H100 and D103 contribute to the active site. Residues E231, E267, H270, D295, D306, D308, and D338 each coordinate Mg(2+).

This sequence belongs to the xylose isomerase family. In terms of assembly, homotetramer. Requires Mg(2+) as cofactor.

The protein resides in the cytoplasm. It catalyses the reaction alpha-D-xylose = alpha-D-xylulofuranose. This Ruegeria pomeroyi (strain ATCC 700808 / DSM 15171 / DSS-3) (Silicibacter pomeroyi) protein is Xylose isomerase.